Reading from the N-terminus, the 62-residue chain is MDHSVLNVLVCPICKANLYYGKENQVLVCKADKLAYPIRENIPVMLVEEAKKMTLEEVKKYG.

The protein belongs to the UPF0434 family.

The chain is UPF0434 protein FTM_0733 from Francisella tularensis subsp. mediasiatica (strain FSC147).